We begin with the raw amino-acid sequence, 327 residues long: Zinc transport protein ZntB (327 aa).

At 1–271 (MDVVEGKALQ…AMNRRTYTMS (271 aa)) the chain is on the cytoplasmic side. The chain crosses the membrane as a helical span at residues 272 to 292 (LLAMVFLPTTFLTGLFGVNLG). Over 293 to 300 (GIPGNTDA) the chain is Periplasmic. The chain crosses the membrane as a helical span at residues 301-321 (FGFTIFCMMLVVLVLSVAWWL). Topologically, residues 322–327 (KRSKWL) are cytoplasmic.

Belongs to the CorA metal ion transporter (MIT) (TC 1.A.35) family.

It is found in the cell inner membrane. It carries out the reaction Zn(2+)(out) + H(+)(out) = Zn(2+)(in) + H(+)(in). In terms of biological role, zinc transporter. Acts as a Zn(2+):proton symporter, which likely mediates zinc ion uptake. The sequence is that of Zinc transport protein ZntB from Yersinia pseudotuberculosis serotype O:1b (strain IP 31758).